A 136-amino-acid chain; its full sequence is Lymphocyte antigen 6E (136 aa).

The N-terminal stretch at 1–26 is a signal peptide; that stretch reads MSATSNMRVFLPVLLAALLGMEQVHS. The UPAR/Ly6 domain maps to 27–118; the sequence is LMCFSCTDQK…AGLGLRASIP (92 aa). Intrachain disulfides connect cysteine 29-cysteine 54, cysteine 32-cysteine 41, cysteine 47-cysteine 76, cysteine 80-cysteine 98, and cysteine 99-cysteine 104. N-linked (GlcNAc...) asparagine glycosylation is present at asparagine 105. Residue alanine 108 is the site of GPI-anchor amidated alanine attachment. Residues 109-136 constitute a propeptide, removed in mature form; the sequence is AGLGLRASIPLLGLGLLLSLLALLQLSP.

As to quaternary structure, interacts with CHRNA4. Interacts with CD3Z/CD247. In terms of tissue distribution, ubiquitously expressed in mouse adult tissues with maximal expression in the lung and the salivary gland. Expression is strikingly lower in the fetal tissues except for the placenta. Present in thymus where its expression is observed in immature thymocytes and thymic stromal cells. Also found on functionally active T-cells as well as B-cells and thymic dendritic cells.

It localises to the cell membrane. GPI-anchored cell surface protein that regulates T-lymphocytes proliferation, differentiation, and activation. Regulates the T-cell receptor (TCR) signaling by interacting with component CD3Z/CD247 at the plasma membrane, leading to CD3Z/CD247 phosphorylation modulation. Restricts the entry of murine coronavirus, mouse hepatitis virus, by interfering with spike protein-mediated membrane fusion. Also plays an essential role in placenta formation by acting as the main receptor for syncytin-A (SynA). Therefore, participates in the normal fusion of syncytiotrophoblast layer I (SynT-I) and in the proper morphogenesis of both fetal and maternal vasculatures within the placenta. May also act as a modulator of nicotinic acetylcholine receptors (nAChRs) activity. In vitro inhibits alpha-3:beta-4-containing nAChRs maximum response. The sequence is that of Lymphocyte antigen 6E from Mus musculus (Mouse).